A 146-amino-acid polypeptide reads, in one-letter code: Small ribosomal subunit protein uS9x (146 aa).

Belongs to the universal ribosomal protein uS9 family.

The protein resides in the cytoplasm. In Arabidopsis thaliana (Mouse-ear cress), this protein is Small ribosomal subunit protein uS9x (RPS16C).